A 1698-amino-acid chain; its full sequence is Protein DOP1 (1698 aa).

Ser-244 is modified (phosphoserine).

It belongs to the DOP1 family. As to quaternary structure, interacts with MON2.

The protein localises to the golgi apparatus membrane. Required for traffic between late Golgi and early endosomes, and for the normal structure and organization of the endoplasmic reticulum. Required for normal cellular morphogenesis. The chain is Protein DOP1 (DOP1) from Saccharomyces cerevisiae (strain ATCC 204508 / S288c) (Baker's yeast).